A 195-amino-acid chain; its full sequence is Antigenic thaumatin-like protein ARB_01183 (195 aa).

Residues 1-22 (MHSNTAVIALSALAALVPAALA) form the signal peptide. Disulfide bonds link Cys-125–Cys-153 and Cys-130–Cys-137. The segment at 171–195 (GPKKMFKPVQEKAANRPRHPHARPE) is disordered. Over residues 185-195 (NRPRHPHARPE) the composition is skewed to basic residues.

Belongs to the thaumatin family.

It is found in the secreted. Its function is as follows. Might be involved in the inhibition of growth of fungal competitors and pathogenicity. This chain is Antigenic thaumatin-like protein ARB_01183, found in Arthroderma benhamiae (strain ATCC MYA-4681 / CBS 112371) (Trichophyton mentagrophytes).